The sequence spans 500 residues: Histidine ammonia-lyase (500 aa).

The segment at residues 141 to 143 (ASG) is a cross-link (5-imidazolinone (Ala-Gly)). Serine 142 carries the 2,3-didehydroalanine (Ser) modification.

Belongs to the PAL/histidase family. Post-translationally, contains an active site 4-methylidene-imidazol-5-one (MIO), which is formed autocatalytically by cyclization and dehydration of residues Ala-Ser-Gly.

The protein resides in the cytoplasm. It carries out the reaction L-histidine = trans-urocanate + NH4(+). It participates in amino-acid degradation; L-histidine degradation into L-glutamate; N-formimidoyl-L-glutamate from L-histidine: step 1/3. This chain is Histidine ammonia-lyase, found in Shouchella clausii (strain KSM-K16) (Alkalihalobacillus clausii).